The chain runs to 265 residues: Ni-sirohydrochlorin a,c-diamide reductive cyclase complex, component CfbC (265 aa).

Belongs to the NifH/BchL/ChlL family. As to quaternary structure, homodimer. The Ni-sirohydrochlorin a,c-diamide reductive cyclase complex is composed of a NifH homolog component CfbC and a NifD homolog component CfbD. Requires [4Fe-4S] cluster as cofactor.

It carries out the reaction Ni-sirohydrochlorin a,c-diamide + 3 AH2 + ATP + H2O = 15,17(3)-seco-F430-17(3)-acid + 3 A + ADP + phosphate. Functionally, involved in the biosynthesis of the unique nickel-containing tetrapyrrole coenzyme F430, the prosthetic group of methyl-coenzyme M reductase (MCR), which plays a key role in methanogenesis and anaerobic methane oxidation. Catalyzes both the six-electron reduction of the tetrahydroporphyrin ring system and the gamma-lactamization of the c-acetamide side chain of Ni-sirohydrochlorin a,c-diamide to yield 15,17(3)-seco-F430-17(3)-acid (seco-F430), the last intermediate in the biosynthesis of the coenzyme F430. This Methanosarcina barkeri (strain Fusaro / DSM 804) protein is Ni-sirohydrochlorin a,c-diamide reductive cyclase complex, component CfbC.